Here is a 654-residue protein sequence, read N- to C-terminus: MICOS complex subunit MIC60-2 (654 aa).

Residues 1 to 12 constitute a mitochondrion transit peptide; sequence MRGSRNLLTQRL. The Mitochondrial matrix portion of the chain corresponds to 13–20; the sequence is ASSRATGS. A helical membrane pass occupies residues 21–43; the sequence is SGGLKFVGATVGAVTAGAAGVAG. The Mitochondrial intermembrane segment spans residues 44-654; it reads YASYDNEFRK…AALTSIRSTY (611 aa). A compositionally biased stretch (basic and acidic residues) spans 115-129; sequence LKETTEPKKIEKKPE. The interval 115–140 is disordered; it reads LKETTEPKKIEKKPENPYIGAKTPLN.

This sequence belongs to the MICOS complex subunit Mic60 family. As to quaternary structure, component of the mitochondrial contact site and cristae organizing system (MICOS) complex. Expressed in the gonads and muscle cells.

The protein localises to the mitochondrion inner membrane. It localises to the cytoplasm. Functionally, sustains mitochondrial morphology probably through maintaining cristae morphology. May act as a component of the MICOS complex, a large protein complex of the mitochondria. This is MICOS complex subunit MIC60-2 from Caenorhabditis elegans.